We begin with the raw amino-acid sequence, 326 residues long: DnaJ homolog subfamily B member 6 (326 aa).

The J domain occupies 2–69 (VDYYEVLGVQ…KKRDIYDKYG (68 aa)). The interaction with HSP70 stretch occupies residues 2–146 (VDYYEVLGVQ…TGSFFSAFSG (145 aa)). An interaction with KRT18 region spans residues 119 to 242 (FEDFFGNRRG…ADDDALAEER (124 aa)). An Omega-N-methylarginine modification is found at arginine 135. A disordered region spans residues 249–326 (ALPAQPAGLR…KKKKSTKGNH (78 aa)). The residue at position 277 (serine 277) is a Phosphoserine.

As to quaternary structure, homooligomer. Interacts with BAG3, HSPB8 and STUB1. Interacts with ALKBH1. Interacts with HSP70, KRT18 and PTTG. In terms of assembly, interacts with histone deacetylases HDAC4, HDAC6, and SIRT2, HDAC activity is required for antiaggregation. In terms of tissue distribution, widely expressed. Highest levels in testis and brain, and lower levels in heart, spleen, intestine, ovary, placenta, lung, kidney, pancreas, thymus, prostate, skeletal muscle, liver and leukocytes. In testis, expressed in germ cells in the earlier stages of differentiation pathway as well as in spermatids. In brain, expressed at a higher level in hippocampus and thalamus and a lower level in amygdala, substantia nigra, corpus callosum and caudate nucleus.

It is found in the cytoplasm. The protein localises to the perinuclear region. The protein resides in the nucleus. It localises to the myofibril. Its subcellular location is the sarcomere. It is found in the z line. Has a stimulatory effect on the ATPase activity of HSP70 in a dose-dependent and time-dependent manner and hence acts as a co-chaperone of HSP70. Plays an indispensable role in the organization of KRT8/KRT18 filaments. Acts as an endogenous molecular chaperone for neuronal proteins including huntingtin. Suppresses aggregation and toxicity of polyglutamine-containing, aggregation-prone proteins. Also reduces cellular toxicity and caspase-3 activity. Its function is as follows. Isoform B but not isoform A inhibits huntingtin aggregation. The protein is DnaJ homolog subfamily B member 6 (DNAJB6) of Homo sapiens (Human).